Consider the following 160-residue polypeptide: MIP18 family protein F45G2.10 (160 aa).

Positions 1–32 are disordered; it reads MGQERLDNANPTLFDSKPRHRPVTGTERDESV.

It belongs to the MIP18 family.

Functionally, may play a role in chromosome segregation through establishment of sister chromatid cohesion. In Caenorhabditis elegans, this protein is MIP18 family protein F45G2.10.